Reading from the N-terminus, the 88-residue chain is Putative membrane protein insertion efficiency factor (88 aa).

The protein belongs to the UPF0161 family.

It localises to the cell membrane. In terms of biological role, could be involved in insertion of integral membrane proteins into the membrane. The protein is Putative membrane protein insertion efficiency factor (yrcB) of Lactococcus lactis subsp. lactis (strain IL1403) (Streptococcus lactis).